Consider the following 268-residue polypeptide: Interleukin-1 alpha (268 aa).

A propeptide spanning residues 1–112 is cleaved from the precursor; sequence MAKVPDLFED…DTEEEIIKPR (112 aa). An N6-acetyllysine modification is found at K82. The nuclear localization signal (NLS) stretch occupies residues 82-86; that stretch reads KKRRL. S87 is subject to Phosphoserine. N-linked (GlcNAc...) asparagine glycans are attached at residues N102 and N141.

This sequence belongs to the IL-1 family. As to quaternary structure, monomer. Interacts with TMED10; the interaction mediates the translocation from the cytoplasm into the ERGIC (endoplasmic reticulum-Golgi intermediate compartment) and thereby secretion. Interacts with IL1R1. Interacts with S100A13; this interaction is the first step in the export of IL1A, followed by direct translocation of this complex across the plasma membrane. Post-translationally, acetylated within its nuclear localization sequence, which impacts subcellular localization. In terms of processing, proteolytic processed by CAPN1 in a calcium-dependent manner. Cleavage from 31 kDa precursor to 18 kDa biologically active molecules. Phosphorylated. Phosphorylation greatly enhances susceptibility to digestion and promotes the conversion of pre-IL1A alpha to the biologically active IL1A.

Its subcellular location is the nucleus. It localises to the cytoplasm. It is found in the secreted. Its function is as follows. Cytokine constitutively present intracellularly in nearly all resting non-hematopoietic cells that plays an important role in inflammation and bridges the innate and adaptive immune systems. After binding to its receptor IL1R1 together with its accessory protein IL1RAP, forms the high affinity interleukin-1 receptor complex. Signaling involves the recruitment of adapter molecules such as MYD88, IRAK1 or IRAK4. In turn, mediates the activation of NF-kappa-B and the three MAPK pathways p38, p42/p44 and JNK pathways. Within the cell, acts as an alarmin and cell death results in its liberation in the extracellular space after disruption of the cell membrane to induce inflammation and alert the host to injury or damage. In addition to its role as a danger signal, which occurs when the cytokine is passively released by cell necrosis, directly senses DNA damage and acts as signal for genotoxic stress without loss of cell integrity. In Capra hircus (Goat), this protein is Interleukin-1 alpha (IL1A).